A 1342-amino-acid polypeptide reads, in one-letter code: DNA-directed RNA polymerase subunit beta (1342 aa).

This sequence belongs to the RNA polymerase beta chain family. The RNAP catalytic core consists of 2 alpha, 1 beta, 1 beta' and 1 omega subunit. When a sigma factor is associated with the core the holoenzyme is formed, which can initiate transcription.

The enzyme catalyses RNA(n) + a ribonucleoside 5'-triphosphate = RNA(n+1) + diphosphate. DNA-dependent RNA polymerase catalyzes the transcription of DNA into RNA using the four ribonucleoside triphosphates as substrates. In Vibrio campbellii (strain ATCC BAA-1116), this protein is DNA-directed RNA polymerase subunit beta.